The following is a 200-amino-acid chain: Potassium-transporting ATPase KdpC subunit (200 aa).

A helical transmembrane segment spans residues 9 to 31; sequence LVMLVALTALTGLVYPLAMTGVA. The disordered stretch occupies residues 68-97; that stretch reads GRPSATTAPDPQDSSKTVPSPYNAANSMGA. Positions 71–96 are enriched in polar residues; that stretch reads SATTAPDPQDSSKTVPSPYNAANSMG.

It belongs to the KdpC family. As to quaternary structure, the system is composed of three essential subunits: KdpA, KdpB and KdpC.

The protein resides in the cell inner membrane. In terms of biological role, part of the high-affinity ATP-driven potassium transport (or Kdp) system, which catalyzes the hydrolysis of ATP coupled with the electrogenic transport of potassium into the cytoplasm. This subunit acts as a catalytic chaperone that increases the ATP-binding affinity of the ATP-hydrolyzing subunit KdpB by the formation of a transient KdpB/KdpC/ATP ternary complex. This Rhodopseudomonas palustris (strain BisA53) protein is Potassium-transporting ATPase KdpC subunit.